We begin with the raw amino-acid sequence, 577 residues long: Steryl-sulfatase (577 aa).

Residues 1–19 form the signal peptide; that stretch reads MLWPCLLALLLSQLNFLCA. The Lumenal portion of the chain corresponds to 21-183; it reads RPGPGPNFLL…GTVFGSAQQV (163 aa). 2 residues coordinate Ca(2+): aspartate 34 and aspartate 35. Asparagine 46 carries N-linked (GlcNAc...) asparagine glycosylation. Position 74 (cysteine 74) interacts with Ca(2+). Cysteine 74 acts as the Nucleophile in catalysis. Cysteine 74 is modified (3-oxoalanine (Cys)). Histidine 135 is a catalytic residue. Cystine bridges form between cysteine 140/cysteine 147 and cysteine 169/cysteine 241. Residues 184 to 207 form a helical membrane-spanning segment; that stretch reads FVVLPMNILGAVLLAMALARWAGL. Residues 208 to 211 are Cytoplasmic-facing; sequence ARPP. The chain crosses the membrane as a helical span at residues 212-233; that stretch reads GWVFGVTVAAMAAVGGAYVAFL. At 234-577 the chain is on the lumenal side; sequence YHFRPANCFL…PLACRCAGDG (344 aa). N-linked (GlcNAc...) asparagine glycosylation occurs at asparagine 332. Aspartate 341 and histidine 342 together coordinate Ca(2+). Disulfide bonds link cysteine 445/cysteine 488, cysteine 480/cysteine 486, and cysteine 561/cysteine 571. N-linked (GlcNAc...) asparagine glycosylation is present at asparagine 458.

This sequence belongs to the sulfatase family. As to quaternary structure, homodimer. It depends on Ca(2+) as a cofactor. Post-translationally, the conversion to 3-oxoalanine (also known as C-formylglycine, FGly), of a serine or cysteine residue in prokaryotes and of a cysteine residue in eukaryotes, is critical for catalytic activity.

The protein localises to the microsome membrane. Its subcellular location is the endoplasmic reticulum membrane. The enzyme catalyses dehydroepiandrosterone 3-sulfate + H2O = 3beta-hydroxyandrost-5-en-17-one + sulfate + H(+). The catalysed reaction is estrone 3-sulfate + H2O = estrone + sulfate + H(+). Functionally, catalyzes the conversion of sulfated steroid precursors, such as dehydroepiandrosterone sulfate (DHEA-S) and estrone sulfate to the free steroid. This chain is Steryl-sulfatase (Sts), found in Rattus norvegicus (Rat).